The primary structure comprises 382 residues: Lysophosphatidylserine lipase ABHD12 (382 aa).

Residues 1 to 12 are compositionally biased toward basic and acidic residues; sequence MRKRKGSADHDS. The segment at 1 to 45 is disordered; that stretch reads MRKRKGSADHDSSFTATLTDGSSDLKQCHKGTDADTDPGGSGKEM. Residues 1–60 are Cytoplasmic-facing; the sequence is MRKRKGSADHDSSFTATLTDGSSDLKQCHKGTDADTDPGGSGKEMGRRCRRGGLMWRLRR. A compositionally biased stretch (polar residues) spans 13–25; the sequence is SFTATLTDGSSDL. Residues 61–81 form a helical membrane-spanning segment; the sequence is ILIWLLGIYIAIPVIIKVCPS. Residues 82–382 are Extracellular-facing; that stretch reads IQAKLVFLNF…DFLRAPHPHG (301 aa). N109 is a glycosylation site (N-linked (GlcNAc...) asparagine). S232 acts as the Nucleophile in catalysis. Residues D319 and H358 each act as charge relay system in the active site.

It belongs to the serine esterase family. Ubiquitously expressed in adult tissues.

Its subcellular location is the endoplasmic reticulum membrane. It catalyses the reaction 1-(9Z-octadecenoyl)-sn-glycero-3-phospho-L-serine + H2O = sn-glycero-3-phospho-L-serine + (9Z)-octadecenoate + H(+). The enzyme catalyses 1-(9Z-octadecenoyl)-sn-glycero-3-phospho-(1'-sn-glycerol) + H2O = sn-glycero-3-phospho-(1'-sn-glycerol) + (9Z)-octadecenoate + H(+). The catalysed reaction is 1-(9Z-octadecenoyl)-sn-glycero-3-phospho-(1D-myo-inositol) + H2O = sn-glycero-3-phospho-1D-myo-inositol + (9Z)-octadecenoate + H(+). It carries out the reaction 1-(9Z-octadecenoyl)-sn-glycero-3-phosphoethanolamine + H2O = sn-glycero-3-phosphoethanolamine + (9Z)-octadecenoate + H(+). It catalyses the reaction 1-(9Z-octadecenoyl)-sn-glycero-3-phosphocholine + H2O = 1-(9Z-octadecenoyl)-sn-glycerol + phosphocholine + H(+). The enzyme catalyses 2-(9Z-octadecenoyl)-glycerol + H2O = glycerol + (9Z)-octadecenoate + H(+). The catalysed reaction is 1-hexadecanoyl-sn-glycero-3-phospho-L-serine + H2O = sn-glycero-3-phospho-L-serine + hexadecanoate + H(+). It carries out the reaction 2-(5Z,8Z,11Z,14Z-eicosatetraenoyl)-glycerol + H2O = glycerol + (5Z,8Z,11Z,14Z)-eicosatetraenoate + H(+). It catalyses the reaction Hydrolyzes glycerol monoesters of long-chain fatty acids.. The enzyme catalyses 1-decanoylglycerol + H2O = decanoate + glycerol + H(+). The catalysed reaction is 1-dodecanoylglycerol + H2O = dodecanoate + glycerol + H(+). It carries out the reaction 1-tetradecanoylglycerol + H2O = tetradecanoate + glycerol + H(+). It catalyses the reaction 2-hexadecanoylglycerol + H2O = glycerol + hexadecanoate + H(+). The enzyme catalyses 1-(9Z-octadecenoyl)-glycerol + H2O = glycerol + (9Z)-octadecenoate + H(+). The catalysed reaction is 2-(9Z,12Z-octadecadienoyl)-glycerol + H2O = (9Z,12Z)-octadecadienoate + glycerol + H(+). It carries out the reaction 1-(5Z,8Z,11Z,14Z-eicosatetraenoyl)-glycerol + H2O = glycerol + (5Z,8Z,11Z,14Z)-eicosatetraenoate + H(+). It catalyses the reaction 1-(9Z,12Z-octadecadienoyl)-glycerol + H2O = (9Z,12Z)-octadecadienoate + glycerol + H(+). The enzyme catalyses 1-hexadecanoylglycerol + H2O = glycerol + hexadecanoate + H(+). The catalysed reaction is 1-octadecanoylglycerol + H2O = octadecanoate + glycerol + H(+). It carries out the reaction 1-octadecanoyl-2-(9,10-epoxyoctadecanoyl)-sn-glycero-3-phospho-L-serine + H2O = 9,10-epoxyoctadecanoate + 1-octadecanoyl-sn-glycero-3-phosphoserine + H(+). It catalyses the reaction 1-octadecanoyl-2-(10-hydroxyoctadecanoyl)-sn-glycero-3-phospho-L-serine + H2O = 1-octadecanoyl-sn-glycero-3-phosphoserine + 10-hydroxyoctadecanoate + H(+). The enzyme catalyses 1-hexadecanoyl-2-(10-hydroxyoctadecanoyl)-sn-glycero-3-phospho-L-serine + H2O = 10-hydroxyoctadecanoate + 1-hexadecanoyl-sn-glycero-3-phospho-L-serine + H(+). Functionally, lysophosphatidylserine (LPS) lipase that mediates the hydrolysis of lysophosphatidylserine, a class of signaling lipids that regulates immunological and neurological processes. Represents a major lysophosphatidylserine lipase in the brain, thereby playing a key role in the central nervous system. Also able to hydrolyze oxidized phosphatidylserine; oxidized phosphatidylserine is produced in response to severe inflammatory stress and constitutes a proapoptotic 'eat me' signal. Also has monoacylglycerol (MAG) lipase activity: hydrolyzes 2-arachidonoylglycerol (2-AG), thereby acting as a regulator of endocannabinoid signaling pathways. Has a strong preference for very-long-chain lipid substrates; substrate specificity is likely due to improved catalysis and not improved substrate binding. This chain is Lysophosphatidylserine lipase ABHD12, found in Danio rerio (Zebrafish).